A 734-amino-acid chain; its full sequence is Monosaccharide-sensing protein 1 (734 aa).

The next 6 helical transmembrane spans lie at 6-26 (LVAL…ATIA), 44-64 (GLVV…SGPI), 79-99 (VMYF…VLCF), 102-122 (LLNG…ISET), 133-153 (TLPQ…VFTM), and 163-183 (AMLG…VFYL). Residues 351-403 (YNKDNDDYATDDGAGDDDDSDNDLRSPLMSRQTTSMDKDMIPHPTSGSTLSMR) are disordered. Acidic residues predominate over residues 357–371 (DYATDDGAGDDDDSD). Residues serine 446 and serine 480 each carry the phosphoserine modification. 6 consecutive transmembrane segments (helical) span residues 510 to 530 (ALVV…NGVL), 556 to 576 (ASFL…VVAM), 588 to 608 (LLWT…SELI), 621 to 641 (GCVV…PNIL), 653 to 673 (LCIA…TYSL), and 680 to 700 (IGLV…WIFV).

This sequence belongs to the major facilitator superfamily. Sugar transporter (TC 2.A.1.1) family. In terms of assembly, binds to VIK at the tonoplast. Post-translationally, phosphorylated by VIK; this activation promotes carrier activity. In terms of tissue distribution, mostly expressed in juvenile and adult leaves, to a lower extent, in flower tissues, and, at low levels, in roots and stems.

Its subcellular location is the vacuole membrane. The catalysed reaction is D-glucose(out) + H(+)(in) = D-glucose(in) + H(+)(out). It carries out the reaction sucrose(out) + H(+)(in) = sucrose(in) + H(+)(out). With respect to regulation, enhanced activation by VIK-mediated phosphorylation promoting carrier activity and consequently vacuolar sugar accumulation. Sugar proton-coupled antiporter which contributes to vacuolar sugar import (e.g. monosaccharides including glucose, sucrose and fructose), particularly during stress responses (e.g. in response to cold). Required for cytosolic glucose homeostasis. The protein is Monosaccharide-sensing protein 1 of Arabidopsis thaliana (Mouse-ear cress).